Reading from the N-terminus, the 105-residue chain is Large ribosomal subunit protein bL21 (105 aa).

This sequence belongs to the bacterial ribosomal protein bL21 family. In terms of assembly, part of the 50S ribosomal subunit. Contacts protein L20.

Functionally, this protein binds to 23S rRNA in the presence of protein L20. The polypeptide is Large ribosomal subunit protein bL21 (Frankia casuarinae (strain DSM 45818 / CECT 9043 / HFP020203 / CcI3)).